Reading from the N-terminus, the 774-residue chain is Cilium assembly protein DZIP1L (774 aa).

Residues 166–189 form a C2H2-type zinc finger; the sequence is HTCHLCDKTFMNATFLRGHIQRRH. Positions 204-450 form a coiled coil; that stretch reads LGEVLEELRA…RKVLAALRKN (247 aa). Disordered stretches follow at residues 415-435, 515-674, and 686-774; these read MPKAVATEEDSSEEELEASLE, NKEV…ASSG, and KQLE…IPGW. The span at 421 to 433 shows a compositional bias: acidic residues; it reads TEEDSSEEELEAS. Serine 425 and serine 426 each carry phosphoserine. The span at 515-526 shows a compositional bias: basic and acidic residues; the sequence is NKEVSSRVKQRW. Residues 597-616 show a composition bias toward low complexity; it reads GPSSTPVSPGSGLSSTPPFS.

Belongs to the DZIP C2H2-type zinc-finger protein family. In terms of assembly, interacts with SEPTIN2.

It is found in the cytoplasm. It localises to the cytoskeleton. Its subcellular location is the cilium basal body. The protein localises to the microtubule organizing center. The protein resides in the centrosome. It is found in the centriole. Involved in primary cilium formation. Probably acts as a transition zone protein required for localization of PKD1/PC1 and PKD2/PC2 to the ciliary membrane. The polypeptide is Cilium assembly protein DZIP1L (Mus musculus (Mouse)).